Here is a 199-residue protein sequence, read N- to C-terminus: Probable GTP-binding protein EngB (199 aa).

Positions 28–199 (DLPEIALAGR…DSWDAILEQV (172 aa)) constitute an EngB-type G domain. Residues 36-43 (GRSNVGKS), 63-67 (GKTQL), 81-84 (DVPG), 148-151 (TKAD), and 180-182 (FSS) contribute to the GTP site. Mg(2+) is bound by residues Ser43 and Thr65.

Belongs to the TRAFAC class TrmE-Era-EngA-EngB-Septin-like GTPase superfamily. EngB GTPase family. Mg(2+) serves as cofactor.

In terms of biological role, necessary for normal cell division and for the maintenance of normal septation. This is Probable GTP-binding protein EngB from Streptococcus pyogenes serotype M18 (strain MGAS8232).